The primary structure comprises 415 residues: MFDRKLTLSQVDPEVWAAIQKEDVRQEQHIELIASENYASPAVMQAQGTQLTNKYAEGYPGKRYYGGCEYVDVVEQLAIDRLKQLFGAEAANVQPNSGSQANQGVYMAVLKPGDTVLGMSLAEGGHLTHGASVNASGKLYNFISYGLDANEVLDYAQVEQLAKEHKPKLIVAGASAYALHIDFERLARIAHDNGALLMVDIAHYAGLVAGGAYPNPVPHADFVTSTTHKSLRGPRGGVIMMKAEYEKIINSAIFPGIQGGPLMHVIAAKAVAFQEALSPEFKQYAQQVAKNAKVLAETLVKRGLRIVSGRTESHVMLVDLRPKGITGKEAEAVLGQAHITVNKNAIPNDPEKPFVTSGIRLGTPAMTTRGFKEAEAELTANLIADVLDNPRDEANIAAVRARVNELTARLPVYGG.

(6S)-5,6,7,8-tetrahydrofolate contacts are provided by residues Leu121 and 125–127; that span reads GHL. Lys229 carries the post-translational modification N6-(pyridoxal phosphate)lysine.

This sequence belongs to the SHMT family. In terms of assembly, homodimer. The cofactor is pyridoxal 5'-phosphate.

The protein localises to the cytoplasm. It carries out the reaction (6R)-5,10-methylene-5,6,7,8-tetrahydrofolate + glycine + H2O = (6S)-5,6,7,8-tetrahydrofolate + L-serine. The protein operates within one-carbon metabolism; tetrahydrofolate interconversion. It participates in amino-acid biosynthesis; glycine biosynthesis; glycine from L-serine: step 1/1. Catalyzes the reversible interconversion of serine and glycine with tetrahydrofolate (THF) serving as the one-carbon carrier. This reaction serves as the major source of one-carbon groups required for the biosynthesis of purines, thymidylate, methionine, and other important biomolecules. Also exhibits THF-independent aldolase activity toward beta-hydroxyamino acids, producing glycine and aldehydes, via a retro-aldol mechanism. The polypeptide is Serine hydroxymethyltransferase (Bordetella petrii (strain ATCC BAA-461 / DSM 12804 / CCUG 43448)).